Reading from the N-terminus, the 140-residue chain is ATP synthase epsilon chain (140 aa).

It belongs to the ATPase epsilon chain family. F-type ATPases have 2 components, CF(1) - the catalytic core - and CF(0) - the membrane proton channel. CF(1) has five subunits: alpha(3), beta(3), gamma(1), delta(1), epsilon(1). CF(0) has three main subunits: a, b and c.

The protein resides in the cell inner membrane. Produces ATP from ADP in the presence of a proton gradient across the membrane. The chain is ATP synthase epsilon chain from Janthinobacterium sp. (strain Marseille) (Minibacterium massiliensis).